The primary structure comprises 201 residues: Small ribosomal subunit protein eS1 (201 aa).

This sequence belongs to the eukaryotic ribosomal protein eS1 family.

This chain is Small ribosomal subunit protein eS1, found in Methanoregula boonei (strain DSM 21154 / JCM 14090 / 6A8).